Consider the following 100-residue polypeptide: uncharacterized protein (100 aa).

The HTH arsR-type domain occupies 1-100; it reads MEPIEVFKAL…KLADFLKTEI (100 aa). The segment at residues 44-67 is a DNA-binding region (H-T-H motif); it reads VSQITDKLKMTQSTASQYLTILLR.

This is an uncharacterized protein from Bacillus subtilis (strain 168).